We begin with the raw amino-acid sequence, 471 residues long: Putative multidrug resistance protein MdtD (471 aa).

Topologically, residues 1–11 (MTDLPDSTRWQ) are periplasmic. A helical membrane pass occupies residues 12-32 (LWIVAFGFFMQSLDTTIVNTA). The Cytoplasmic portion of the chain corresponds to 33–48 (LPSMAQSLGESPLHMH). A helical membrane pass occupies residues 49–69 (MVIVSYVLTVAVMLPASGWLA). Residues 70–76 (DKVGVRN) lie on the Periplasmic side of the membrane. The helical transmembrane segment at 77–97 (IFFTAIVLFTLGSLFCALSGT) threads the bilayer. The Cytoplasmic segment spans residues 98–101 (LNEL). Residues 102–124 (LLARALQGVGGAMMVPVGRLTVM) traverse the membrane as a helical segment. Residues 125 to 137 (KIVPREQYMAAMT) lie on the Periplasmic side of the membrane. The helical transmembrane segment at 138–158 (FVTLPGQIGPLLGPALGGLLV) threads the bilayer. Over 159–164 (EYASWH) the chain is Cytoplasmic. A helical membrane pass occupies residues 165-185 (WIFLINIPVGIIGAITTLMLM). The Periplasmic segment spans residues 186 to 196 (PNYTMQTRRFD). The chain crosses the membrane as a helical span at residues 197–217 (LSGFLLLAVGMAVLTLALDGS). At 218-224 (KGTGFSP) the chain is on the cytoplasmic side. A helical membrane pass occupies residues 225 to 245 (LAIAGLVAVGVVALVLYLLHA). The Periplasmic segment spans residues 246 to 262 (QNNNRALFSLKLFRTRT). Residues 263 to 283 (FSLGLAGSFAGRIGSGMLPFM) traverse the membrane as a helical segment. Residues 284-285 (TP) lie on the Cytoplasmic side of the membrane. Residues 286-306 (VFLQIGFGFSPFHAGLMMIPM) form a helical membrane-spanning segment. The Periplasmic portion of the chain corresponds to 307 to 341 (VLGSMGMKRIVVQVVNRFGYRRVLVATTLGLSLVT). The chain crosses the membrane as a helical span at residues 342–362 (LLFMTTALLGWYYVLPFVLFL). Residues 363 to 395 (QGMVNSTRFSSMNTLTLKDLPDNLASSGNSLLS) are Cytoplasmic-facing. The chain crosses the membrane as a helical span at residues 396 to 416 (MIMQLSMSIGVTIAGLLLGLF). Residues 417–430 (GSQHVSVDSGTTQT) are Periplasmic-facing. The helical transmembrane segment at 431–451 (VFMYTWLSMASIIALPAFIFA) threads the bilayer. Residues 452–471 (RVPNDTHQNVAISRRKRSAQ) are Cytoplasmic-facing.

This sequence belongs to the major facilitator superfamily. TCR/Tet family.

It localises to the cell inner membrane. This chain is Putative multidrug resistance protein MdtD, found in Escherichia coli O6:H1 (strain CFT073 / ATCC 700928 / UPEC).